The sequence spans 375 residues: ATAGKVIKCKAAVCWGPKQPLSIEEIEVAPPKRHEVRVKIVATGICRSDDHVISGALSDMKFPVILGHEAAGVVESVGEGVTKFKPGDKVIPLFVPQCGECRCCKNPESNLCYKNDIGKYDGVLLDKTSRFTCKGKSIHNFISTSTFTEYTVLDEIAVAKIHEDAPLEKVCLIGCGFSTGYGSAVNTGKVKPGSTCAVFGLGGVGLSVIIGCKVAGASRIIGVDLNSDKFTTAKECGATECINPKDYNIPIHEVLAKMTDDGVDYAFEVIGNTTVMTSALSSSHFGCGKTVIVGLAPSSAVMSFDPLLILTGRILTGAVFGGWKSKDDVPKLVRDYLNKKFDFDPLITHYMPFEKINEGFELLRNGKSIRTILTF.

Alanine 1 carries the post-translational modification N-acetylalanine. Zn(2+) contacts are provided by cysteine 46, histidine 68, cysteine 98, cysteine 101, cysteine 104, cysteine 112, and cysteine 175. NAD(+) contacts are provided by residues 200-205 (GLGGVG), aspartate 224, lysine 229, 293-295 (VGL), and arginine 370.

The protein belongs to the zinc-containing alcohol dehydrogenase family. Class-I subfamily. It depends on Zn(2+) as a cofactor.

The protein resides in the cytoplasm. The catalysed reaction is a primary alcohol + NAD(+) = an aldehyde + NADH + H(+). It carries out the reaction a secondary alcohol + NAD(+) = a ketone + NADH + H(+). The protein is Alcohol dehydrogenase 1 of Pelophylax perezi (Perez's frog).